Consider the following 250-residue polypeptide: Sugar fermentation stimulation protein homolog (250 aa).

Belongs to the SfsA family.

The sequence is that of Sugar fermentation stimulation protein homolog from Synechococcus sp. (strain CC9311).